We begin with the raw amino-acid sequence, 152 residues long: Ribonuclease H (152 aa).

Residues 4-145 (SRSMVEIFSD…CDELARQAIA (142 aa)) enclose the RNase H type-1 domain. D13, E51, D73, and D137 together coordinate Mg(2+).

It belongs to the RNase H family. Monomer. It depends on Mg(2+) as a cofactor.

Its subcellular location is the cytoplasm. The catalysed reaction is Endonucleolytic cleavage to 5'-phosphomonoester.. Its function is as follows. Endonuclease that specifically degrades the RNA of RNA-DNA hybrids. The protein is Ribonuclease H of Syntrophotalea carbinolica (strain DSM 2380 / NBRC 103641 / GraBd1) (Pelobacter carbinolicus).